We begin with the raw amino-acid sequence, 416 residues long: UDP-N-acetylmuramoylalanine--D-glutamate ligase (416 aa).

108-114 contributes to the ATP binding site; the sequence is GTTGKTT.

This sequence belongs to the MurCDEF family.

It localises to the cytoplasm. It catalyses the reaction UDP-N-acetyl-alpha-D-muramoyl-L-alanine + D-glutamate + ATP = UDP-N-acetyl-alpha-D-muramoyl-L-alanyl-D-glutamate + ADP + phosphate + H(+). The protein operates within cell wall biogenesis; peptidoglycan biosynthesis. Its function is as follows. Cell wall formation. Catalyzes the addition of glutamate to the nucleotide precursor UDP-N-acetylmuramoyl-L-alanine (UMA). This chain is UDP-N-acetylmuramoylalanine--D-glutamate ligase, found in Chlamydia trachomatis serovar A (strain ATCC VR-571B / DSM 19440 / HAR-13).